A 207-amino-acid polypeptide reads, in one-letter code: MARYTGPVCRLCRREGVKLYLKGEKCYSDKCPIVKRATPPGQHGASRRKPTEYAIQLREKQKARRYYGVLERQFERYFEMASRKKGVTGEVLLQTLERRLDNVVYRMGFAASRAEARQIVKHSHIEVNGRKVNIPSYLVREGDVVAVRESSREHKRIKELAAAATRTVPAWLSVDPEALRGTVLRLPNRDEIDTPVQEQLIVEFYSR.

One can recognise an S4 RNA-binding domain in the interval 98–161; that stretch reads RRLDNVVYRM…REHKRIKELA (64 aa).

This sequence belongs to the universal ribosomal protein uS4 family. In terms of assembly, part of the 30S ribosomal subunit. Contacts protein S5. The interaction surface between S4 and S5 is involved in control of translational fidelity.

In terms of biological role, one of the primary rRNA binding proteins, it binds directly to 16S rRNA where it nucleates assembly of the body of the 30S subunit. Its function is as follows. With S5 and S12 plays an important role in translational accuracy. In Symbiobacterium thermophilum (strain DSM 24528 / JCM 14929 / IAM 14863 / T), this protein is Small ribosomal subunit protein uS4A.